A 359-amino-acid chain; its full sequence is Prostaglandin F2-alpha receptor (359 aa).

Residues 1–31 (MSMNNSKQLVSPAAALLSNTTCQTENRLSVF) are Extracellular-facing. N-linked (GlcNAc...) asparagine glycosylation is found at N4 and N19. A helical membrane pass occupies residues 32–54 (FSVIFMTVGILSNSLAIAILMKA). At 55-69 (YQRFRQKSKASFLLL) the chain is on the cytoplasmic side. The chain crosses the membrane as a helical span at residues 70-90 (ASGLVITDFFGHLINGAIAVF). Residues 91-109 (VYASDKEWIRFDQSNVLCS) lie on the Extracellular side of the membrane. C108 and C186 are oxidised to a cystine. A helical transmembrane segment spans residues 110–131 (IFGICMVFSGLCPLLLGSVMAI). Topologically, residues 132-152 (ERCIGVTKPIFHSTKITSKHV) are cytoplasmic. A helical transmembrane segment spans residues 153-175 (KMMLSGVCLFAVFIALLPILGHR). At 176–198 (DYKIQASRTWCFYNTEDIKDWED) the chain is on the extracellular side. Residues 199–224 (RFYLLLFSFLGLLALGVSLLCNAITG) form a helical membrane-spanning segment. At 225 to 250 (ITLLRVKFKSQQHRQGRSHHLEMVIQ) the chain is on the cytoplasmic side. Residues 251 to 267 (LLAIMCVSCICWSPFLV) traverse the membrane as a helical segment. The Extracellular segment spans residues 268–285 (TMANIGINGNHSLETCET). Residues 286-307 (TLFALRMATWNQILDPWVYILL) traverse the membrane as a helical segment. The Cytoplasmic portion of the chain corresponds to 308 to 359 (RKAVLKNLYKLASQCCGVHVISLHIWELSSIKNSLKVAAISESPVAEKSAST).

This sequence belongs to the G-protein coupled receptor 1 family. In terms of assembly, isoform 1 can form heterodimers with isoform 5 (and probably other isoforms). Eye.

The protein resides in the cell membrane. Functionally, receptor for prostaglandin F2-alpha (PGF2-alpha). The activity of this receptor is mediated by G proteins which activate a phosphatidylinositol-calcium second messenger system. Initiates luteolysis in the corpus luteum. Isoforms 2 to 7 do not bind PGF2-alpha but are proposed to modulate signaling by participating in variant receptor complexes; heterodimers between isoform 1 and isoform 5 are proposed to be a receptor for prostamides including the synthetic analog bimatoprost. This Homo sapiens (Human) protein is Prostaglandin F2-alpha receptor (PTGFR).